The sequence spans 390 residues: Protein-glutamate methylesterase/protein-glutamine glutaminase 1 (390 aa).

The Response regulatory domain occupies lysine 4–leucine 121. Aspartate 55 is modified (4-aspartylphosphate). Residues serine 132–alanine 186 show a composition bias toward low complexity. The tract at residues serine 132–alanine 201 is disordered. One can recognise a CheB-type methylesterase domain in the interval proline 195 to glutamate 387. Active-site residues include serine 214, histidine 241, and aspartate 334.

It belongs to the CheB family. Phosphorylated by CheA. Phosphorylation of the N-terminal regulatory domain activates the methylesterase activity.

It is found in the cytoplasm. It carries out the reaction [protein]-L-glutamate 5-O-methyl ester + H2O = L-glutamyl-[protein] + methanol + H(+). It catalyses the reaction L-glutaminyl-[protein] + H2O = L-glutamyl-[protein] + NH4(+). In terms of biological role, involved in chemotaxis. Part of a chemotaxis signal transduction system that modulates chemotaxis in response to various stimuli. Catalyzes the demethylation of specific methylglutamate residues introduced into the chemoreceptors (methyl-accepting chemotaxis proteins or MCP) by CheR. Also mediates the irreversible deamidation of specific glutamine residues to glutamic acid. This chain is Protein-glutamate methylesterase/protein-glutamine glutaminase 1, found in Pseudomonas syringae pv. tomato (strain ATCC BAA-871 / DC3000).